Reading from the N-terminus, the 295-residue chain is Cbb3-type cytochrome c oxidase subunit CcoP (295 aa).

At 1 to 31 (MAQKEKDALSGVETTGHEWDGLRELNNPLPK) the chain is on the cytoplasmic side. A helical membrane pass occupies residues 32 to 52 (WWLYIFYVCIAWSLVYYVLYP). At 53 to 295 (AWPLGKSYTK…VYVHNLGGGK (243 aa)) the chain is on the periplasmic side. Cytochrome c domains lie at 108-200 (FAMA…LSLN) and 207-292 (AAAE…HNLG). Heme c is bound by residues cysteine 121, cysteine 124, histidine 125, methionine 175, cysteine 220, cysteine 223, histidine 224, and methionine 269.

It belongs to the CcoP / FixP family. Component of the cbb3-type cytochrome c oxidase at least composed of CcoN, CcoO, CcoQ and CcoP. Requires heme c as cofactor.

It is found in the cell inner membrane. It functions in the pathway energy metabolism; oxidative phosphorylation. Functionally, C-type cytochrome. Part of the cbb3-type cytochrome c oxidase complex. CcoP subunit is required for transferring electrons from donor cytochrome c via its heme groups to CcoO subunit. From there, electrons are shuttled to the catalytic binuclear center of CcoN subunit where oxygen reduction takes place. The complex also functions as a proton pump. The protein is Cbb3-type cytochrome c oxidase subunit CcoP of Azospirillum brasilense.